The primary structure comprises 520 residues: Ubiquitin carboxyl-terminal hydrolase MINDY-1 (520 aa).

The segment at 1 to 155 (MADSCADTVD…ENEGAVAGAM (155 aa)) is disordered. Over residues 26–37 (KNEDLEQTKPQK) the composition is skewed to basic and acidic residues. Residues 43–54 (TEESSACVSQIK) show a composition bias toward polar residues. The segment covering 77-86 (ATSSASVTSK) has biased composition (low complexity). Polar residues-rich tracts occupy residues 93–112 (VINS…SFSM) and 132–146 (SAKS…SVQE). Cys189 (nucleophile) is an active-site residue. Catalysis depends on His371, which acts as the Proton acceptor. Disordered stretches follow at residues 422–441 (SQKP…QQMQ) and 467–520 (ELAR…CCIL). Residues 441–479 (QIDQDYLVAMSLQQEQGEAPGPLSDLELARQLQQEEYQQ) are ubiquitin-binding domain (UBD). Residues 469–498 (ARQLQQEEYQQPQTQQQQQQQPSAGQMRGQ) show a composition bias toward low complexity. A compositionally biased stretch (basic and acidic residues) spans 511–520 (KKEETDCCIL).

It belongs to the MINDY deubiquitinase family. FAM63 subfamily.

The catalysed reaction is Thiol-dependent hydrolysis of ester, thioester, amide, peptide and isopeptide bonds formed by the C-terminal Gly of ubiquitin (a 76-residue protein attached to proteins as an intracellular targeting signal).. Its function is as follows. Hydrolase that can specifically remove 'Lys-48'-linked conjugated ubiquitin from proteins. May play a regulatory role at the level of protein turnover. This Danio rerio (Zebrafish) protein is Ubiquitin carboxyl-terminal hydrolase MINDY-1 (mindy1).